Here is a 700-residue protein sequence, read N- to C-terminus: MEFASPEQRRLETIRSHIDTSPTNDQSSSLFLNATASSASPFFKEDSYSVVLPEKLDTGKWNVYRSKRSPTKLVSRFPDHPEIGTLHDNFVHAVETYAENKYLGTRVRSDGTIGEYSWMTYGEAASERQAIGSGLLFHGVNQGDCVGLYFINRPEWLVVDHACAAYSFVSVPLYDTLGPDAVKFVVNHANLQAIFCVPQTLNILLSFLAEIPSIRLIVVVGGADEHLPSLPRGTGVTIVSYQKLLSQGRSSLHPFSPPKPEDIATICYTSGTTGTPKGVVLTHGNLIANVAGSSVEAEFFPSDVYISYLPLAHIYERANQIMGVYGGVAVGFYQGDVFKLMDDFAVLRPTIFCSVPRLYNRIYDGITSAVKSSGVVKKRLFEIAYNSKKQAIINGRTPSAFWDKLVFNKIKEKLGGRVRFMGSGASPLSPDVMDFLRICFGCSVREGYGMTETSCVISAMDDGDNLSGHVGSPNPACEVKLVDVPEMNYTSDDQPYPRGEICVRGPIIFKGYYKDEEQTREILDGDGWLHTGDIGLWLPGGRLKIIDRKKNIFKLAQGEYIAPEKIENVYTKCRFVSQCFIHGDSFNSSLVAIVSVDPEVMKDWAASEGIKYEHLGQLCNDPRVRKTVLAEMDDLGREAQLRGFEFAKAVTLVPEPFTLENGLLTPTFKIKRPQAKAYFAEAISKMYAEIAASNPIPSKL.

Positions 1 to 29 are disordered; sequence MEFASPEQRRLETIRSHIDTSPTNDQSSS. A compositionally biased stretch (basic and acidic residues) spans 7–18; the sequence is EQRRLETIRSHI. A Microbody targeting signal motif is present at residues 10-18; that stretch reads RLETIRSHI. Positions 19–29 are enriched in polar residues; it reads DTSPTNDQSSS. 266 to 277 contacts ATP; that stretch reads ICYTSGTTGTPK. The segment at 526–550 is fatty acid-binding; it reads DGWLHTGDIGLWLPGGRLKIIDRKK. Positions 698–700 match the Microbody targeting signal motif; it reads SKL.

This sequence belongs to the ATP-dependent AMP-binding enzyme family. As to quaternary structure, interacts with PEX5. Mg(2+) is required as a cofactor. As to expression, expressed in roots, stems, leaves flowers and germinating seedling. Preferentially expressed in seeds.

The protein resides in the peroxisome. The enzyme catalyses a long-chain fatty acid + ATP + CoA = a long-chain fatty acyl-CoA + AMP + diphosphate. The catalysed reaction is decanoate + ATP + CoA = decanoyl-CoA + AMP + diphosphate. It carries out the reaction dodecanoate + ATP + CoA = dodecanoyl-CoA + AMP + diphosphate. It catalyses the reaction tetradecanoate + ATP + CoA = tetradecanoyl-CoA + AMP + diphosphate. The enzyme catalyses hexadecanoate + ATP + CoA = hexadecanoyl-CoA + AMP + diphosphate. The catalysed reaction is (9Z)-octadecenoate + ATP + CoA = (9Z)-octadecenoyl-CoA + AMP + diphosphate. It carries out the reaction (9Z,12Z)-octadecadienoate + ATP + CoA = (9Z,12Z)-octadecadienoyl-CoA + AMP + diphosphate. It catalyses the reaction (9Z,12Z,15Z)-octadecatrienoate + ATP + CoA = (9Z,12Z,15Z)-octadecatrienoyl-CoA + AMP + diphosphate. It participates in lipid metabolism; fatty acid metabolism. Functionally, activation of long-chain fatty acids for both synthesis of cellular lipids, and degradation via beta-oxidation. Preferentially uses palmitate, palmitoleate, oleate, linoleate and eicosenoate as substrates. Can use myristate and linolenate as substrates. Functions redundantly with LACS6 in lipid mobilization for beta-oxidation during seed germination, which is essential for postgerminative growth and seedling establishment. In Arabidopsis thaliana (Mouse-ear cress), this protein is Long chain acyl-CoA synthetase 7, peroxisomal.